A 330-amino-acid polypeptide reads, in one-letter code: MKTAYIAKQRQISFVKSHFSRQLEECLGLIEVQAPILSRVGDGTQDNLSGCEKAVQVKVKALPDAQFEVVHSLAKWKRQTLGQHDFSAGEGLYTHMKALRPDEDRLSPLHSVYVDQWDWERVMGDGERQFSTLKSTVEAIWAGIKATEAAVSEEFGLAPFLPDQIHFVHSQELLSRYPDLDAKGRERAIAKDLGAVFLVGIGGKLSDGHRHDVRAPDYDDWSTPSELGHAGLNGDILVWNPVLEDAFELSSMGIRVDADTLKHQLALTGDEDRLQLEWHQALLRGEMPQTIGGGIGQSRLTMLLLQLPHIGQVQCGVWPAAVRESVPSLL.

Belongs to the class-II aminoacyl-tRNA synthetase family. AsnA subfamily.

The protein resides in the cytoplasm. The catalysed reaction is L-aspartate + NH4(+) + ATP = L-asparagine + AMP + diphosphate + H(+). Its pathway is amino-acid biosynthesis; L-asparagine biosynthesis; L-asparagine from L-aspartate (ammonia route): step 1/1. The chain is Aspartate--ammonia ligase from Shigella boydii serotype 18 (strain CDC 3083-94 / BS512).